The following is a 113-amino-acid chain: 4-cresol dehydrogenase [hydroxylating] cytochrome c subunit (113 aa).

The N-terminal stretch at 1–33 (MTFPFSGAAVKRMLVTGVVLPFGLLVAAGQAQA) is a signal peptide. 4 residues coordinate heme c: C48, C51, H52, and M83.

As to quaternary structure, tetramer of two cytochrome subunits and two flavoprotein subunits. In terms of processing, binds 1 heme c group covalently per subunit.

Its pathway is aromatic compound metabolism; p-cresol degradation. Its function is as follows. This is the heme-containing component of the p-cresol methylhydroxylase. It accepts electrons from the flavoprotein subunit. This chain is 4-cresol dehydrogenase [hydroxylating] cytochrome c subunit (pchC), found in Pseudomonas putida (Arthrobacter siderocapsulatus).